The primary structure comprises 212 residues: ATP phosphoribosyltransferase (212 aa).

It belongs to the ATP phosphoribosyltransferase family. Short subfamily. In terms of assembly, heteromultimer composed of HisG and HisZ subunits.

It is found in the cytoplasm. It catalyses the reaction 1-(5-phospho-beta-D-ribosyl)-ATP + diphosphate = 5-phospho-alpha-D-ribose 1-diphosphate + ATP. It functions in the pathway amino-acid biosynthesis; L-histidine biosynthesis; L-histidine from 5-phospho-alpha-D-ribose 1-diphosphate: step 1/9. In terms of biological role, catalyzes the condensation of ATP and 5-phosphoribose 1-diphosphate to form N'-(5'-phosphoribosyl)-ATP (PR-ATP). Has a crucial role in the pathway because the rate of histidine biosynthesis seems to be controlled primarily by regulation of HisG enzymatic activity. The chain is ATP phosphoribosyltransferase from Clostridium botulinum (strain ATCC 19397 / Type A).